The sequence spans 308 residues: Ribosomal RNA large subunit methyltransferase F (308 aa).

Belongs to the methyltransferase superfamily. METTL16/RlmF family.

The protein localises to the cytoplasm. The enzyme catalyses adenosine(1618) in 23S rRNA + S-adenosyl-L-methionine = N(6)-methyladenosine(1618) in 23S rRNA + S-adenosyl-L-homocysteine + H(+). Functionally, specifically methylates the adenine in position 1618 of 23S rRNA. The polypeptide is Ribosomal RNA large subunit methyltransferase F (Salmonella dublin (strain CT_02021853)).